A 127-amino-acid chain; its full sequence is Large ribosomal subunit protein bL20 (127 aa).

The protein belongs to the bacterial ribosomal protein bL20 family.

In terms of biological role, binds directly to 23S ribosomal RNA and is necessary for the in vitro assembly process of the 50S ribosomal subunit. It is not involved in the protein synthesizing functions of that subunit. The protein is Large ribosomal subunit protein bL20 of Streptomyces griseus subsp. griseus (strain JCM 4626 / CBS 651.72 / NBRC 13350 / KCC S-0626 / ISP 5235).